The primary structure comprises 134 residues: Holo-[acyl-carrier-protein] synthase (134 aa).

Mg(2+) is bound by residues D8 and E57.

Belongs to the P-Pant transferase superfamily. AcpS family. Requires Mg(2+) as cofactor.

The protein localises to the cytoplasm. It catalyses the reaction apo-[ACP] + CoA = holo-[ACP] + adenosine 3',5'-bisphosphate + H(+). Transfers the 4'-phosphopantetheine moiety from coenzyme A to a Ser of acyl-carrier-protein. The protein is Holo-[acyl-carrier-protein] synthase of Brucella abortus (strain S19).